Consider the following 583-residue polypeptide: Sphingomyelin phosphodiesterase A (583 aa).

The first 21 residues, 1 to 21, serve as a signal peptide directing secretion; the sequence is MKSIPIILLVLIGLLLASVYS. In terms of domain architecture, Saposin B-type spans 51-133; that stretch reads IQLSCDVCQI…GYFKICSATG (83 aa). Disulfide bonds link Cys-55/Cys-129, Cys-58/Cys-123, and Cys-86/Cys-97. Asn-72 carries N-linked (GlcNAc...) asparagine glycosylation. A glycan (N-linked (GlcNAc...) asparagine) is linked at Asn-182. 2 residues coordinate Zn(2+): Asp-193 and His-195. A disulfide bridge connects residues Cys-214 and Cys-229. Residues Asp-258 and Asn-298 each coordinate Zn(2+). Asn-377 carries N-linked (GlcNAc...) asparagine glycosylation. Positions 401, 436, and 438 each coordinate Zn(2+). 4 N-linked (GlcNAc...) asparagine glycosylation sites follow: Asn-495, Asn-500, Asn-537, and Asn-547. Cys-567 and Cys-580 form a disulfide bridge.

The protein belongs to the acid sphingomyelinase family. It depends on Zn(2+) as a cofactor.

It localises to the secreted. Converts sphingomyelin to ceramide. In Dictyostelium discoideum (Social amoeba), this protein is Sphingomyelin phosphodiesterase A (sgmA).